The following is a 949-amino-acid chain: Coiled-coil domain-containing protein 66 (949 aa).

Phosphothreonine is present on residues Thr115 and Thr121. Ser369 carries the post-translational modification Phosphoserine. Residues 474 to 558 are a coiled coil; the sequence is QVEEKCRKKQ…EQRIRELAQK (85 aa). The mediates localization to cilia, centrosomes and spindle microtubules and the interaction with PCM1, CEP290, CEP104 and CSPP1 stretch occupies residues 570–949; the sequence is GVDTIQIEYN…NQEENFGSSF (380 aa). A Phosphoserine modification is found at Ser606. Disordered stretches follow at residues 691–714 and 789–809; these read QTKH…KRYI and SFSK…RTQQ.

In terms of assembly, homodimer; disulfide-linked. Interacts with CEP290. Interacts with PCM1. Interacts with ARMC9, TOGARAM1, CSPP1 and CEP104. Interacts with CDK5RAP2, CEP152, CEP192, TBG1 and PRC1.

The protein resides in the cytoplasm. The protein localises to the cytoskeleton. It localises to the microtubule organizing center. It is found in the centrosome. Its subcellular location is the centriolar satellite. The protein resides in the cell projection. The protein localises to the cilium. It localises to the cilium basal body. It is found in the cilium axoneme. Its subcellular location is the photoreceptor inner segment. The protein resides in the photoreceptor outer segment. Its function is as follows. Microtubule-binding protein required for ciliogenesis. May function in ciliogenesis by mediating the transport of proteins like BBS4 to the cilium, but also through the organization of the centriolar satellites. Required for the assembly of signaling-competent cilia with proper structure and length. Mediates this function in part by regulating transition zone assembly and basal body recruitment of the IFT-B complex. Cooperates with the ciliopathy proteins CSPP1 and CEP104 during cilium length regulation. Plays two important roles during cell division. First, is required for mitotic progression via regulation of spindle assembly, organization and orientation, levels of spindle microtubules (MTs), kinetochore-fiber integrity, and chromosome alignment. Second, functions during cytokinesis in part by regulating assembly and organization of central spindle and midbody MTs Plays a role in retina morphogenesis and/or homeostasis. This Pongo abelii (Sumatran orangutan) protein is Coiled-coil domain-containing protein 66.